The primary structure comprises 66 residues: Large ribosomal subunit protein bL35 (66 aa).

The segment covering 1–26 has biased composition (basic residues); the sequence is MPKMKTHRGSAKRFKKTASGKLKRGH. The tract at residues 1–29 is disordered; it reads MPKMKTHRGSAKRFKKTASGKLKRGHAYT.

It belongs to the bacterial ribosomal protein bL35 family.

This Geobacillus kaustophilus (strain HTA426) protein is Large ribosomal subunit protein bL35.